Here is a 210-residue protein sequence, read N- to C-terminus: MADS-box protein AGL42 (210 aa).

In terms of domain architecture, MADS-box spans 1 to 61; the sequence is MVRGKIEMKK…GRLYEFSSSD (61 aa). Residues 87–177 form the K-box domain; sequence LQQLKQEASH…HQKNVINPWR (91 aa).

In terms of tissue distribution, expressed in quiescent center (QC) cells of root tips. Expressed at the base of the petiole of cotyledons and leaves, in flower buds, petals, sepals and abscission zone of flowers and siliques.

The protein resides in the nucleus. In terms of biological role, MADS-box transcription factor that acts with AGL71 and AGL72 in the control of flowering time. Promotes flowering at the shoot apical and axillary meristems. Seems to act through a gibberellin-dependent pathway. Interacts genetically with SOC1 and its expression is directly regulated by SOC1. Plays a role in controlling flower organ senescence and abscission by repressing ethylene responses and regulating the expression of BOP2 and IDA. The sequence is that of MADS-box protein AGL42 (AGL42) from Arabidopsis thaliana (Mouse-ear cress).